The following is a 405-amino-acid chain: MSAQPISDFYAYPDAAGHFGKFGGRFVAETLIGPLQELSAAYDQARQDPSFIAEYDKDLKHYVGRPSPIYHAERLSREVGGAQILLKREDLNHTGAHKINNTIGQALLASRMGKTRIIAETGAGQHGVASATVAARLGLECLVYMGATDIERQKINVYRMKLLGATVIPVTSGSATLKDALNEAMRDWVTNVRDTFYIIGTVAGPDPYPRMVRDFNAIVGREARAQMLEDYGRLPDAISACVGGGSNAIGLFHAFLNDPGVKIYGAEAAGDGIATGRHAASIAAGRPGVLHGNRTYVICDDDGQITETHSISAGLDYPGVGPEHAFLSDSGRAVYQGITDDEAMAAFHLLAHTEGILAALESSHAVAQSIKLARELPKDALVLCNLSGRGDKDVHTIAAREGLAL.

The residue at position 98 (Lys98) is an N6-(pyridoxal phosphate)lysine.

It belongs to the TrpB family. Tetramer of two alpha and two beta chains. It depends on pyridoxal 5'-phosphate as a cofactor.

The enzyme catalyses (1S,2R)-1-C-(indol-3-yl)glycerol 3-phosphate + L-serine = D-glyceraldehyde 3-phosphate + L-tryptophan + H2O. It functions in the pathway amino-acid biosynthesis; L-tryptophan biosynthesis; L-tryptophan from chorismate: step 5/5. Functionally, the beta subunit is responsible for the synthesis of L-tryptophan from indole and L-serine. The polypeptide is Tryptophan synthase beta chain (Xanthomonas oryzae pv. oryzae (strain PXO99A)).